Here is a 101-residue protein sequence, read N- to C-terminus: Small ribosomal subunit protein uS14 (101 aa).

Residues methionine 1–asparagine 10 show a composition bias toward basic and acidic residues. Residues methionine 1–glutamate 25 form a disordered region.

The protein belongs to the universal ribosomal protein uS14 family. In terms of assembly, part of the 30S ribosomal subunit. Contacts proteins S3 and S10.

Its function is as follows. Binds 16S rRNA, required for the assembly of 30S particles and may also be responsible for determining the conformation of the 16S rRNA at the A site. The sequence is that of Small ribosomal subunit protein uS14 from Rhodopseudomonas palustris (strain BisA53).